Consider the following 339-residue polypeptide: Hairy/enhancer-of-split related with YRPW motif protein 2 (339 aa).

The tract at residues 1–52 is disordered; it reads MKRPCEETTSESDLDETIDVGSENNYPGHATSSVMRSNSPTTTSQIMARKKR. The span at 8-18 shows a compositional bias: acidic residues; that stretch reads TTSESDLDETI. Over residues 22–46 the composition is skewed to polar residues; that stretch reads SENNYPGHATSSVMRSNSPTTTSQI. Residues 47-116 form a transcriptional repression and interaction with NCOR1 and SIN3A region; it reads MARKKRRGII…GGKGYFDAHA (70 aa). Residues 48 to 103 form the bHLH domain; it reads ARKKRRGIIEKRRRDRINNSLSELRRLVPTAFEKQGSAKLEKAEILQMTVDHLKML. In terms of domain architecture, Orange spans 122–157; that stretch reads MSIGFRECLTEVARYLSSVEGLDPSDPLRVRLVSHL. The disordered stretch occupies residues 310–339; the sequence is SVSAASSPQQTSTGTNNKPYQPWGTEVGAF. Residues 318-328 are compositionally biased toward polar residues; it reads QQTSTGTNNKP. Positions 329–332 match the YQPW motif motif; sequence YQPW.

This sequence belongs to the HEY family. In terms of assembly, may self-associate. Interacts with ARNT. Interacts with GATA4, GATA6, HES1 and HEYL. Interacts with HDAC1, NCOR1 and SIN3A. In terms of tissue distribution, highly expressed in the aorta, lower expression detected in the heart, brain, kidney, lung, muscle, ovary and testis.

It localises to the nucleus. Transcriptional repressor which functions as a downstream effector of Notch signaling in cardiovascular development. Specifically required for the Notch-induced endocardial epithelial to mesenchymal transition, which is itself criticial for cardiac valve and septum development. May be required in conjunction with HEY1 to specify arterial cell fate or identity. Promotes maintenance of neuronal precursor cells and glial versus neuronal fate specification. Binds preferentially to the canonical E box sequence 5'-CACGTG-3'. Represses transcription by the cardiac transcriptional activators GATA4 and GATA6 and by the neuronal bHLH factors ASCL1/MASH1 and NEUROD4/MATH3. This Mus musculus (Mouse) protein is Hairy/enhancer-of-split related with YRPW motif protein 2 (Hey2).